The following is a 149-amino-acid chain: HMG1/2-like protein (149 aa).

Composition is skewed to basic and acidic residues over residues 1–15 (MKGG…KAET) and 35–44 (KGKEPKDPNK). 2 disordered regions span residues 1–52 (MKGG…PSAF) and 112–149 (AYNK…EDDD). Positions 45 to 114 (PKRPPSAFFV…EYEITLQAYN (70 aa)) form a DNA-binding region, HMG box. Residues 134–149 (NDEDEDEEDEEDEDDD) show a composition bias toward acidic residues.

It belongs to the HMGB family.

It localises to the nucleus. The sequence is that of HMG1/2-like protein from Vicia faba (Broad bean).